The sequence spans 652 residues: NAD(P)H-quinone oxidoreductase subunit 5, chloroplastic (652 aa).

16 helical membrane-spanning segments follow: residues 9–29 (WLIPIFPLAGSLLIGIGLISF), 40–60 (YSFLIIALLGISLILSCLILF), 91–111 (PLTAVMLVIVTTVAILVLIYT), 124–144 (FFAYLSLFTTSMLGLVLSPNL), 147–167 (IYVFWELVGMCSYLLIGFWFT), 188–208 (GLLLGILGFYWMTGSFEFDVI), 225–245 (LAIFFGFLIFLGPVAKSAQFP), 258–278 (TPISALIHAATMVAAGVFLVA), 289–309 (FLMDLIAWTGAITAIIGATIA), 327–347 (LGYMIMAMGMGSYTASLFHLM), 354–374 (ALLFLSAGSTIHGMEPIVGFN), 395–415 (GNAFLIGTLSLCGIPPLACFW), 424–444 (AFVHSPLLWFIGWSTAGLTSF), 482–502 (TLPLIILTLFSITIGWIGTPF), 526–546 (LFIAGSSVGIALLGCYTAYLI), and 630–650 (ILMIIFTLLTILGISQTYYSL).

The protein belongs to the complex I subunit 5 family. In terms of assembly, NDH is composed of at least 16 different subunits, 5 of which are encoded in the nucleus.

The protein localises to the plastid. It localises to the chloroplast thylakoid membrane. The enzyme catalyses a plastoquinone + NADH + (n+1) H(+)(in) = a plastoquinol + NAD(+) + n H(+)(out). It catalyses the reaction a plastoquinone + NADPH + (n+1) H(+)(in) = a plastoquinol + NADP(+) + n H(+)(out). In terms of biological role, NDH shuttles electrons from NAD(P)H:plastoquinone, via FMN and iron-sulfur (Fe-S) centers, to quinones in the photosynthetic chain and possibly in a chloroplast respiratory chain. The immediate electron acceptor for the enzyme in this species is believed to be plastoquinone. Couples the redox reaction to proton translocation, and thus conserves the redox energy in a proton gradient. This Mesostigma viride (Green alga) protein is NAD(P)H-quinone oxidoreductase subunit 5, chloroplastic (ndhF).